Here is a 616-residue protein sequence, read N- to C-terminus: MAPRARRRRPLFALLLLCALLARLQVALQIAPPCTSEKHYEHLGRCCNKCEPGKYMSSKCTTTSDSVCLPCGPDEYLDSWNEEDKCLLHKVCDTGKALVAVVAGNSTTPRRCACTAGYHWSQDCECCRRNTECAPGLGAQHPLQLNKDTVCKPCLAGYFSDAFSSTDKCRPWTNCTFLGKRVEHHGTEKSDAVCSSSLPARKPPNEPHVYLPGLIILLLFASVALVAAIIFGVCYRKKGKALTANLWHWINEACGRLSGDKESSGDSCVSTHTANFGQQGACEGVLLLTLEEKTFPEDMCYPDQGGVCQGTCVGGGPYAQGEDARMLSLVSKTEIEEDSFRQMPTEDEYMDRPSQPTDQLLFLTEPGSKSTPPFSEPLEVGENDSLSQCFTGTQSTVGSESCNCTEPLCRTDWTPMSSENYLQKEVDSGHCPHWAASPSPNWADVCTGCRNPPGEDCEPLVGSPKRGPLPQCAYGMGLPPEEEASRTEARDQPEDGADGRLPSSARAGAGSGSSPGGQSPASGNVTGNSNSTFISSGQVMNFKGDIIVVYVSQTSQEGAAAAAEPMGRPVQEETLARRDSFAGNGPRFPDPCGGPEGLREPEKASRPVQEQGGAKA.

The first 29 residues, 1-29 (MAPRARRRRPLFALLLLCALLARLQVALQ), serve as a signal peptide directing secretion. The Extracellular segment spans residues 30 to 212 (IAPPCTSEKH…PPNEPHVYLP (183 aa)). 9 disulfide bridges follow: Cys34–Cys46, Cys47–Cys60, Cys50–Cys68, Cys71–Cys86, Cys92–Cys112, Cys114–Cys127, Cys124–Cys126, Cys133–Cys151, and Cys154–Cys169. TNFR-Cys repeat units lie at residues 34–68 (CTSE…DSVC), 71–112 (CGPD…PRRC), 114–151 (CTAG…DTVC), and 154–194 (CLAG…DAVC). Asn105 carries an N-linked (GlcNAc...) asparagine glycan. 3 residues coordinate Na(+): Cys133, Ala134, and Ser160. An N-linked (GlcNAc...) asparagine glycan is attached at Asn174. A disulfide bridge connects residues Cys175 and Cys194. A helical transmembrane segment spans residues 213 to 233 (GLIILLLFASVALVAAIIFGV). Over 234 to 616 (CYRKKGKALT…PVQEQGGAKA (383 aa)) the chain is Cytoplasmic. The interval 468 to 536 (PLPQCAYGMG…GNSNSTFISS (69 aa)) is disordered. Residues 483 to 493 (EASRTEARDQP) are compositionally biased toward basic and acidic residues. Positions 499–508 (GRLPSSARAG) are enriched in low complexity. Polar residues predominate over residues 524-536 (NVTGNSNSTFISS). Residues 544-549 (GDIIVV) are required for interaction with EEIG1 and osteoclast differentiation. The tract at residues 556–616 (QEGAAAAAEP…PVQEQGGAKA (61 aa)) is disordered. A compositionally biased stretch (basic and acidic residues) spans 570 to 580 (VQEETLARRDS). At Ser580 the chain carries Phosphoserine.

As to quaternary structure, binds to the clefts between the subunits of the TNFSF11 ligand trimer to form a heterohexamer. Part of a complex composed of EEIG1, TNFRSF11A/RANK, PLCG2, GAB2, TEC and BTK; complex formation increases in the presence of TNFSF11/RANKL. Interacts with TRAF1, TRAF2, TRAF3, TRAF5 and TRAF6. Interacts (via cytoplasmic domain) with GAB2. Interacts (via cytoplasmic domain); with EEIG1 (via N-terminus); when in the presence of TNFSF11/RANKL. As to expression, ubiquitous expression with high levels in skeletal muscle, thymus, liver, colon, small intestine and adrenal gland.

The protein resides in the cell membrane. The protein localises to the membrane raft. Functionally, receptor for TNFSF11/RANKL/TRANCE/OPGL; essential for RANKL-mediated osteoclastogenesis. Its interaction with EEIG1 promotes osteoclastogenesis via facilitating the transcription of NFATC1 and activation of PLCG2. Involved in the regulation of interactions between T-cells and dendritic cells. The protein is Tumor necrosis factor receptor superfamily member 11A (TNFRSF11A) of Homo sapiens (Human).